Reading from the N-terminus, the 435-residue chain is Tol-Pal system protein TolB (435 aa).

A signal peptide spans 1-26 (MKTFSLLRILIVLVGMAGAFATPAMA).

It belongs to the TolB family. In terms of assembly, the Tol-Pal system is composed of five core proteins: the inner membrane proteins TolA, TolQ and TolR, the periplasmic protein TolB and the outer membrane protein Pal. They form a network linking the inner and outer membranes and the peptidoglycan layer.

It localises to the periplasm. Part of the Tol-Pal system, which plays a role in outer membrane invagination during cell division and is important for maintaining outer membrane integrity. The sequence is that of Tol-Pal system protein TolB from Allorhizobium ampelinum (strain ATCC BAA-846 / DSM 112012 / S4) (Agrobacterium vitis (strain S4)).